Reading from the N-terminus, the 396-residue chain is S-adenosylmethionine synthase (396 aa).

Residue His16 coordinates ATP. A Mg(2+)-binding site is contributed by Asp18. Residue Glu44 participates in K(+) binding. Glu57 and Gln100 together coordinate L-methionine. The segment at 100 to 110 (QSVDIAQGVDR) is flexible loop. ATP contacts are provided by residues 165–167 (DAK), Asp240, 246–247 (RK), Ala263, and Lys267. Asp240 is an L-methionine binding site. Lys271 provides a ligand contact to L-methionine.

It belongs to the AdoMet synthase family. Homotetramer; dimer of dimers. Mg(2+) serves as cofactor. Requires K(+) as cofactor.

The protein resides in the cytoplasm. It catalyses the reaction L-methionine + ATP + H2O = S-adenosyl-L-methionine + phosphate + diphosphate. The protein operates within amino-acid biosynthesis; S-adenosyl-L-methionine biosynthesis; S-adenosyl-L-methionine from L-methionine: step 1/1. Functionally, catalyzes the formation of S-adenosylmethionine (AdoMet) from methionine and ATP. The overall synthetic reaction is composed of two sequential steps, AdoMet formation and the subsequent tripolyphosphate hydrolysis which occurs prior to release of AdoMet from the enzyme. The protein is S-adenosylmethionine synthase of Pseudomonas syringae pv. syringae (strain B728a).